A 562-amino-acid polypeptide reads, in one-letter code: Tetratricopeptide repeat protein 39A (562 aa).

TPR repeat units lie at residues Ala273–Trp306, Cys463–Ile496, and Pro504–Tyr537.

It belongs to the TTC39 family.

The polypeptide is Tetratricopeptide repeat protein 39A (ttc39a) (Xenopus tropicalis (Western clawed frog)).